A 297-amino-acid polypeptide reads, in one-letter code: Acetylglutamate kinase (297 aa).

Residues 72 to 73 (GG), R94, and N193 contribute to the substrate site.

This sequence belongs to the acetylglutamate kinase family. ArgB subfamily.

The protein resides in the cytoplasm. The enzyme catalyses N-acetyl-L-glutamate + ATP = N-acetyl-L-glutamyl 5-phosphate + ADP. It functions in the pathway amino-acid biosynthesis; L-arginine biosynthesis; N(2)-acetyl-L-ornithine from L-glutamate: step 2/4. In terms of biological role, catalyzes the ATP-dependent phosphorylation of N-acetyl-L-glutamate. This is Acetylglutamate kinase from Mycobacterium leprae (strain TN).